The sequence spans 182 residues: Lipoprotein signal peptidase (182 aa).

Transmembrane regions (helical) follow at residues 12 to 32, 68 to 88, and 91 to 111; these read VAVF…TKAW, ATWV…VAGV, and ISMK…GNLI. Active-site residues include Asp-127 and Asp-140. Residues 135 to 155 form a helical membrane-spanning segment; sequence VGNVADIYLVVAGVVLVILIL.

This sequence belongs to the peptidase A8 family.

Its subcellular location is the cell membrane. The catalysed reaction is Release of signal peptides from bacterial membrane prolipoproteins. Hydrolyzes -Xaa-Yaa-Zaa-|-(S,diacylglyceryl)Cys-, in which Xaa is hydrophobic (preferably Leu), and Yaa (Ala or Ser) and Zaa (Gly or Ala) have small, neutral side chains.. It participates in protein modification; lipoprotein biosynthesis (signal peptide cleavage). Its function is as follows. This protein specifically catalyzes the removal of signal peptides from prolipoproteins. The protein is Lipoprotein signal peptidase of Bifidobacterium longum subsp. infantis (strain ATCC 15697 / DSM 20088 / JCM 1222 / NCTC 11817 / S12).